A 342-amino-acid polypeptide reads, in one-letter code: MNLSQDSSAHHQSQDYAGVSDDEDEIDILGEDDPCSPRSHIYQQPTDSDMGDRGVLSPSKLSCNESASHSSGERERGTSKHSLDTTTNGKVKRALVKPPYSYIALITIAIMQSPHKKLTLSGICDFISSKFPYYKDKFPAWQNSIRHNLSLNDCFIKIPREPGNPGKGNYWTLDPASKDMFDNGSFLRRRKRFKRQHQELFKDGLVMYNPLHYCTPNSALQAQQIPMTCLAIPENFAMPNHLVPYPDINITVPCPDQGVHRVLTAQDVDNHPSNSHSKCSFSIENIMGETKEPEKHLTSFNQNWNYNHLLQSSRLCLLPSGSHLANAHHSAQCNLIKFPGCY.

The disordered stretch occupies residues 1 to 89; it reads MNLSQDSSAH…KHSLDTTTNG (89 aa). Residues 20–34 show a composition bias toward acidic residues; that stretch reads SDDEDEIDILGEDDP. Positions 59–70 are enriched in polar residues; the sequence is SKLSCNESASHS. Positions 71-83 are enriched in basic and acidic residues; sequence SGERERGTSKHSL. A DNA-binding region (fork-head) is located at residues 97–191; sequence KPPYSYIALI…DNGSFLRRRK (95 aa).

At the onset of gastrulation, expressed in the superficial layer of cells in the dorsal blastopore lip (Spemann organizer). In the open neural plate, expressed in a row of cells destined to become the floor plate of the neural tube. After neural tube closure, only detected in the tailtip and a small area located at the midbrain/hindbrain boundary.

The protein localises to the nucleus. Transcriptional repressor. The chain is Forkhead box protein D5-C (foxd5-c) from Xenopus laevis (African clawed frog).